Reading from the N-terminus, the 560-residue chain is MTQAREYDYIIIGAGSAGNVLATRLTEDPDVQVLLLEAGGPDYRFDFRTQMPAALAYPLQGKRYNWAFETDPEPYMNNRRMECGRGKGLGGSSLINGMCYLRGNALDYDNWAKIPGLEDWNYLQCLPYFKRAETRDIGPNDYHGGDGPVSVATPKEGNNELYGAFIRAGIEAGYPATEDVNGYQQEGFGPMDRTTTPNGRRASTARGYLDIAKQRPNLTIETHATTDVIEFEGKRAVGVSYERKGQAQRVRARREVLLCAGAIASPQILQRSGVGNPEHLEEFDIPVVHELPGVGENLQDHLEMYIQYECKKPISLYPALKWYNQPKIGAEWLFFGKGIGASNQFEAAGFIRTNDQEEWPNLQYHFLPIAISYNGKSAVQAHGFQAHVGSMRSMSRGRIRLTSRDPKAAPSILFNYMSHDKDWQEFRDAIRITREIIEQPTMDEYRGREISPGPNVQSDAELDEFVRQHAETAYHPAGSCKMGSADDAMAVVDGAGRVHGLEGLRVIDASIMPVIATGNLNAPTIMIAEKMADKVRGRDPLPPAKVDYYVANGAPARRRA.

8-37 contributes to the FAD binding site; sequence DYIIIGAGSAGNVLATRLTEDPDVQVLLLE. The Proton acceptor role is filled by His475.

The protein belongs to the GMC oxidoreductase family. Requires FAD as cofactor.

The catalysed reaction is choline + A = betaine aldehyde + AH2. It catalyses the reaction betaine aldehyde + NAD(+) + H2O = glycine betaine + NADH + 2 H(+). The protein operates within amine and polyamine biosynthesis; betaine biosynthesis via choline pathway; betaine aldehyde from choline (cytochrome c reductase route): step 1/1. Functionally, involved in the biosynthesis of the osmoprotectant glycine betaine. Catalyzes the oxidation of choline to betaine aldehyde and betaine aldehyde to glycine betaine at the same rate. In Chromohalobacter salexigens (strain ATCC BAA-138 / DSM 3043 / CIP 106854 / NCIMB 13768 / 1H11), this protein is Oxygen-dependent choline dehydrogenase 1.